Reading from the N-terminus, the 338-residue chain is Cytosolic sulfotransferase 16 (338 aa).

Lys-81–Trp-86 provides a ligand contact to 3'-phosphoadenylyl sulfate. His-143 serves as the catalytic Proton acceptor. Residues Arg-165, Ser-173, Tyr-231, and Arg-301–Gly-303 contribute to the 3'-phosphoadenylyl sulfate site.

The protein belongs to the sulfotransferase 1 family. As to expression, highly expressed in roots, stems and mature leaves. Low expression in young leaves and flowers. Barely detected in siliques.

Its subcellular location is the cytoplasm. It carries out the reaction (Z)-desulfoglucotropeolin + 3'-phosphoadenylyl sulfate = (Z)-glucotropeolin + adenosine 3',5'-bisphosphate + H(+). The enzyme catalyses (Z)-indolylmethyl desulfoglucosinolate + 3'-phosphoadenylyl sulfate = (Z)-glucobrassicin + adenosine 3',5'-bisphosphate + H(+). Its activity is regulated as follows. Inhibited by phosphoadenosine 5'-phosphate (PAP). Functionally, sulfotransferase that utilizes 3'-phospho-5'-adenylyl sulfate (PAPS) as sulfonate donor to catalyze the sulfate conjugation of desulfo-glucosinolates (dsGSs), the final step in the biosynthesis of the glucosinolate core structure. Substrate preference is desulfo-2-phenylethyl glucosinolate &gt; desulfo-indol-3-yl methyl glucosinolate &gt; desulfo-benzyl glucosinolate &gt; desulfo-6-methylthiohexyl glucosinolate &gt; desulfo-4-methylthiobutyl glucosinolate &gt; desulfo-3-methylthiopropyl glucosinolate &gt; desulfo-singrin &gt; desulfo-3-butenyl glucosinolate. The polypeptide is Cytosolic sulfotransferase 16 (SOT16) (Arabidopsis thaliana (Mouse-ear cress)).